The sequence spans 371 residues: Chorismate synthase (371 aa).

NADP(+) is bound by residues Arg48 and Arg54. FMN contacts are provided by residues Arg130 to Ser132, Asn242 to Ala243, Gly287, Lys302 to Ser306, and Arg328.

The protein belongs to the chorismate synthase family. As to quaternary structure, homotetramer. Requires FMNH2 as cofactor.

The catalysed reaction is 5-O-(1-carboxyvinyl)-3-phosphoshikimate = chorismate + phosphate. It participates in metabolic intermediate biosynthesis; chorismate biosynthesis; chorismate from D-erythrose 4-phosphate and phosphoenolpyruvate: step 7/7. Its function is as follows. Catalyzes the anti-1,4-elimination of the C-3 phosphate and the C-6 proR hydrogen from 5-enolpyruvylshikimate-3-phosphate (EPSP) to yield chorismate, which is the branch point compound that serves as the starting substrate for the three terminal pathways of aromatic amino acid biosynthesis. This reaction introduces a second double bond into the aromatic ring system. The sequence is that of Chorismate synthase from Azorhizobium caulinodans (strain ATCC 43989 / DSM 5975 / JCM 20966 / LMG 6465 / NBRC 14845 / NCIMB 13405 / ORS 571).